Here is a 184-residue protein sequence, read N- to C-terminus: Shikimate kinase (184 aa).

17–22 contacts ATP; sequence GAGKTT. Mg(2+) is bound at residue Thr21. Positions 39, 63, and 85 each coordinate substrate. Arg123 is a binding site for ATP. Arg142 provides a ligand contact to substrate.

The protein belongs to the shikimate kinase family. Monomer. Requires Mg(2+) as cofactor.

Its subcellular location is the cytoplasm. It catalyses the reaction shikimate + ATP = 3-phosphoshikimate + ADP + H(+). It participates in metabolic intermediate biosynthesis; chorismate biosynthesis; chorismate from D-erythrose 4-phosphate and phosphoenolpyruvate: step 5/7. Its function is as follows. Catalyzes the specific phosphorylation of the 3-hydroxyl group of shikimic acid using ATP as a cosubstrate. This is Shikimate kinase from Burkholderia thailandensis (strain ATCC 700388 / DSM 13276 / CCUG 48851 / CIP 106301 / E264).